A 145-amino-acid polypeptide reads, in one-letter code: ATP synthase epsilon chain (145 aa).

Residues 100–123 (RAQRAKQRAEDAIKTASEKHDSDE) are disordered. Positions 106 to 123 (QRAEDAIKTASEKHDSDE) are enriched in basic and acidic residues.

It belongs to the ATPase epsilon chain family. As to quaternary structure, F-type ATPases have 2 components, CF(1) - the catalytic core - and CF(0) - the membrane proton channel. CF(1) has five subunits: alpha(3), beta(3), gamma(1), delta(1), epsilon(1). CF(0) has three main subunits: a, b and c.

It is found in the cell membrane. Functionally, produces ATP from ADP in the presence of a proton gradient across the membrane. The sequence is that of ATP synthase epsilon chain from Latilactobacillus sakei subsp. sakei (strain 23K) (Lactobacillus sakei subsp. sakei).